The following is a 590-amino-acid chain: Type I inositol polyphosphate 5-phosphatase 1 (590 aa).

A disordered region spans residues 47 to 73 (DYSADSDDDYEDRSQEFDPISSGVTNP). Residues 48-57 (YSADSDDDYE) are compositionally biased toward acidic residues. The residue at position 60 (serine 60) is a Phosphoserine. 2 catalytic regions span residues 445-460 (ERII…INLS) and 523-538 (GKRR…WNGK).

It belongs to the inositol polyphosphate 5-phosphatase family. In terms of tissue distribution, expressed ubiquitously.

It catalyses the reaction 1D-myo-inositol 1,4,5-trisphosphate + H2O = 1D-myo-inositol 1,4-bisphosphate + phosphate. The catalysed reaction is 1D-myo-inositol 1,3,4,5-tetrakisphosphate + H2O = 1D-myo-inositol 1,3,4-trisphosphate + phosphate. Has phosphatase activity toward Ins(1,4,5)P3 and Ins(1,3,4,5)P4, but not toward Ins(1,4)P2, Ins(1)P. Seems to be involved in the abscisic acid (ABA) signaling pathway. Could also be able to hydrolyze PtdIns(4,5)P2 and PtdIns(3,4,5)P3. The chain is Type I inositol polyphosphate 5-phosphatase 1 from Arabidopsis thaliana (Mouse-ear cress).